Consider the following 328-residue polypeptide: Ferredoxin--NADP reductase 2 (328 aa).

FAD contacts are provided by glutamate 37, glutamine 45, tyrosine 50, valine 90, phenylalanine 124, aspartate 285, and threonine 325.

The protein belongs to the ferredoxin--NADP reductase type 2 family. Homodimer. The cofactor is FAD.

It carries out the reaction 2 reduced [2Fe-2S]-[ferredoxin] + NADP(+) + H(+) = 2 oxidized [2Fe-2S]-[ferredoxin] + NADPH. The sequence is that of Ferredoxin--NADP reductase 2 from Latilactobacillus sakei subsp. sakei (strain 23K) (Lactobacillus sakei subsp. sakei).